We begin with the raw amino-acid sequence, 209 residues long: Adenylate kinase (209 aa).

59 to 64 (GSGKRT) is a binding site for ATP. Residues 79–108 (SSGQVLTRGVESGSETSQLAHSYVSRGERV) form an NMP region. AMP-binding positions include S80, 106–108 (ERV), 135–138 (GYPR), and Q142. Residues 172-205 (HRRYDPATNKXYHMLDNPPPGGRCRVMRTAPAEG) are LID. R173 is a binding site for ATP.

Belongs to the adenylate kinase family. As to quaternary structure, monomer.

The protein localises to the cytoplasm. The enzyme catalyses AMP + ATP = 2 ADP. Catalyzes the reversible transfer of the terminal phosphate group between ATP and AMP. Plays an important role in cellular energy homeostasis and in adenine nucleotide metabolism. The protein is Adenylate kinase of Trypanosoma brucei rhodesiense.